The chain runs to 153 residues: Superoxide dismutase [Cu-Zn] (153 aa).

Positions 45, 47, and 62 each coordinate Cu cation. A disulfide bridge links Cys-56 with Cys-145. Residues His-62, His-70, His-79, and Asp-82 each contribute to the Zn(2+) site. His-119 is a binding site for Cu cation.

Belongs to the Cu-Zn superoxide dismutase family. In terms of assembly, homodimer. Cu cation is required as a cofactor. Requires Zn(2+) as cofactor.

Its subcellular location is the cytoplasm. It catalyses the reaction 2 superoxide + 2 H(+) = H2O2 + O2. Destroys radicals which are normally produced within the cells and which are toxic to biological systems. In Drosophila orena (Fruit fly), this protein is Superoxide dismutase [Cu-Zn].